The primary structure comprises 749 residues: Tryptophan 2-monooxygenase (749 aa).

FMN-binding residues include Ser232, Glu252, Lys260, and Arg280. Substrate is bound at residue Arg280.

This sequence belongs to the tryptophan 2-monooxygenase family. Requires FMN as cofactor.

It carries out the reaction L-tryptophan + O2 = indole-3-acetamide + CO2 + H2O. It functions in the pathway plant hormone metabolism; auxin biosynthesis. The polypeptide is Tryptophan 2-monooxygenase (aux1) (Rhizobium rhizogenes (Agrobacterium rhizogenes)).